A 142-amino-acid polypeptide reads, in one-letter code: Fluoride-specific ion channel FluC 1 (142 aa).

A run of 4 helical transmembrane segments spans residues 17–37 (AWVS…GLAL), 42–62 (GFPF…GFYA), 80–100 (FVMT…LETF), and 109–129 (YIAL…VWLG). Glycine 87 and threonine 90 together coordinate Na(+).

The protein belongs to the fluoride channel Fluc/FEX (TC 1.A.43) family.

Its subcellular location is the cell inner membrane. The catalysed reaction is fluoride(in) = fluoride(out). With respect to regulation, na(+) is not transported, but it plays an essential structural role and its presence is essential for fluoride channel function. Its function is as follows. Fluoride-specific ion channel. Important for reducing fluoride concentration in the cell, thus reducing its toxicity. The chain is Fluoride-specific ion channel FluC 1 from Bradyrhizobium diazoefficiens (strain JCM 10833 / BCRC 13528 / IAM 13628 / NBRC 14792 / USDA 110).